The sequence spans 557 residues: MFSRFSWPRITRCFRSYPKKKSSCISFTHHAREHTNFKKPAVVGASITLMASVALVDFDPVKHAGVSSKRAYRVVLAGFLCFSDYKKVLGSSYASEEERQLALSECHLRCAERSLKVFEENGGIYIKIGQHLSAMGYVIPKEWTNTMVKLQDRCPSTSLKDIDHLFRVDTGKGLDETFDEFDPIALGVASLAQVHKARLKDSDVWVAVKVQHPSVSLNSPLDLSMTRWVFKAIKTFFPDFKLMWLADEIERSLPQELDFTREAKNSIETKEHFAHLSTSLYVPEVMWSKPRILVMEYVAGARIDNLSFMDEHSISRDLVSVDICHIFNEMIFGKGGHLHCDPHGGNVLIRSKPKNSKSPRNYEIVLLDHGLYRDIPHELQVDYANMWLNIINFNEKNLKFYAKKVANVSDENFPIFATAITGRPYKSLKSLPIGGPNHEEEQKKFISALQKGGMLQSIIRLLSTMPRLTLLLMKTNDLVRSLDENLKTKSGPEKLYLIMARYCLRCVYDDKMDSLWNSRSFWVSKVFKGTYYRLSYLFSSLKYTLAENYFYYKHMYL.

The N-terminal 33 residues, methionine 1–glutamate 33, are a transit peptide targeting the mitochondrion. Residues histidine 34 to lysine 39 lie on the Mitochondrial matrix side of the membrane. The helical transmembrane segment at proline 40–valine 56 threads the bilayer. Over aspartate 57 to leucine 557 the chain is Mitochondrial intermembrane.

The protein belongs to the protein kinase superfamily. ADCK protein kinase family.

It is found in the mitochondrion inner membrane. Its function is as follows. Involved in mitochondrial lipid homeostasis. The protein is ABC1 family protein MCP2 homolog of Schizosaccharomyces pombe (strain 972 / ATCC 24843) (Fission yeast).